The chain runs to 70 residues: DNA gyrase inhibitor YacG (70 aa).

Residues 1–15 show a composition bias toward basic and acidic residues; that stretch reads MPEDKKAAAKVEPLR. Residues 1 to 22 are disordered; it reads MPEDKKAAAKVEPLRKTRPCPE. Zn(2+)-binding residues include Cys20, Cys23, Cys35, and Cys39.

Belongs to the DNA gyrase inhibitor YacG family. In terms of assembly, interacts with GyrB. Zn(2+) serves as cofactor.

Its function is as follows. Inhibits all the catalytic activities of DNA gyrase by preventing its interaction with DNA. Acts by binding directly to the C-terminal domain of GyrB, which probably disrupts DNA binding by the gyrase. The sequence is that of DNA gyrase inhibitor YacG from Rhizobium johnstonii (strain DSM 114642 / LMG 32736 / 3841) (Rhizobium leguminosarum bv. viciae).